A 155-amino-acid polypeptide reads, in one-letter code: Ribonuclease H (155 aa).

The RNase H type-1 domain occupies 4 to 145 (QQKVVEIYTD…ADALARKAIT (142 aa)). Mg(2+)-binding residues include D13, E51, D73, and D137.

Belongs to the RNase H family. In terms of assembly, monomer. Mg(2+) is required as a cofactor.

Its subcellular location is the cytoplasm. It carries out the reaction Endonucleolytic cleavage to 5'-phosphomonoester.. Functionally, endonuclease that specifically degrades the RNA of RNA-DNA hybrids. This is Ribonuclease H from Bartonella quintana (strain Toulouse) (Rochalimaea quintana).